The primary structure comprises 482 residues: E1B 55 kDa protein (482 aa).

The disordered stretch occupies residues 73–94 (VLDSGEGPSCADDRDKQEKKES). Residues 83-94 (ADDRDKQEKKES) are compositionally biased toward basic and acidic residues. Residues Ser-476 and Ser-477 each carry the phosphoserine modification.

The protein belongs to the adenoviridae E1B 55 kDa protein family. Interacts with host PML-4 and PML-5; this interaction promotes efficient subnuclear targeting of E1B-55K to PML nuclear bodies. Interacts with E4-ORF3 protein. Interacts with E4-ORF6 protein.

It localises to the host nucleus. It is found in the host cytoplasm. Its function is as follows. Plays a major role to prevent cellular inhibition of viral genome replication. Assembles an SCF-like E3 ubiquitin ligase complex based on the cellular proteins ELOB, ELOC, CUL5 and RBX1, in cooperation with viral E4orf6. This viral RING-type ligase ubiquitinates cellular substrates and targets them to proteasomal degradation: TP53/p53, LIG4, MRE11-RAD50-NBS1 (MRN) complex, ITGA3, DAXX and BLM. E1B-55K probably acts as the substrate-specific adapter of the SCF-like E3 ubiquitin ligase complex. Degradation of host TP53/p53 activity is essential for preventing E1A-induced TP53 accumulation that would otherwise lead to cell apoptosis and growth arrest. E1B-55K also inactivates TP53 transcription-factor activity by binding its transactivation domain. E1B-55K also functions as a SUMO1 E3 ligase for TP53 which causes the latter to be sequestered in promyelocytic leukemia (PML) nuclear bodies thereby contributing to maximal inhibition of TP53 function. In Homo sapiens (Human), this protein is E1B 55 kDa protein.